The primary structure comprises 545 residues: ATP synthase subunit alpha (545 aa).

ATP is bound at residue 173–180 (GDRQTGKS).

It belongs to the ATPase alpha/beta chains family. As to quaternary structure, F-type ATPases have 2 components, CF(1) - the catalytic core - and CF(0) - the membrane proton channel. CF(1) has five subunits: alpha(3), beta(3), gamma(1), delta(1), epsilon(1). CF(0) has three main subunits: a(1), b(2) and c(9-12). The alpha and beta chains form an alternating ring which encloses part of the gamma chain. CF(1) is attached to CF(0) by a central stalk formed by the gamma and epsilon chains, while a peripheral stalk is formed by the delta and b chains.

Its subcellular location is the cell membrane. It carries out the reaction ATP + H2O + 4 H(+)(in) = ADP + phosphate + 5 H(+)(out). In terms of biological role, produces ATP from ADP in the presence of a proton gradient across the membrane. The alpha chain is a regulatory subunit. This is ATP synthase subunit alpha from Pseudarthrobacter chlorophenolicus (strain ATCC 700700 / DSM 12829 / CIP 107037 / JCM 12360 / KCTC 9906 / NCIMB 13794 / A6) (Arthrobacter chlorophenolicus).